Consider the following 332-residue polypeptide: Putative peptide import ATP-binding protein BMEII0206 (332 aa).

In terms of domain architecture, ABC transporter spans 11–261 (LEVSNLSVDF…PLHPYTEGLL (251 aa)). 47–54 (GESGSGKS) lines the ATP pocket.

The protein belongs to the ABC transporter superfamily. In terms of assembly, the complex is composed of two ATP-binding proteins (BMEII0205 and BMEII0206), two transmembrane proteins (BMEII0207/BMEII0208 and BMEII0209) and a solute-binding protein (BMEII0210).

It localises to the cell inner membrane. Functionally, probably part of an ABC transporter complex that could be involved in peptide import. Probably responsible for energy coupling to the transport system. The sequence is that of Putative peptide import ATP-binding protein BMEII0206 from Brucella melitensis biotype 1 (strain ATCC 23456 / CCUG 17765 / NCTC 10094 / 16M).